A 198-amino-acid chain; its full sequence is Formate-dependent nitrite reductase complex subunit NrfG (198 aa).

TPR repeat units follow at residues 73 to 106 (SEQW…RGEN) and 144 to 177 (ITAL…NSPR).

Its function is as follows. Required for formate-dependent nitrite reduction. Not required for the biosynthesis of any of the c-type cytochromes nor for the secretion of the periplasmic cytochromes. The protein is Formate-dependent nitrite reductase complex subunit NrfG (nrfG) of Escherichia coli O157:H7.